The following is a 640-amino-acid chain: DNA topoisomerase 3 (640 aa).

A Toprim domain is found at 21–175; the sequence is RVLCVAEKNS…WRAQFSHLEP (155 aa). 3 residues coordinate Mg(2+): E27, D137, and D139. Residues 189 to 618 form the Topo IA-type catalytic domain; sequence DMKLVAAVEC…QLLPLYKEAF (430 aa). Y354 serves as the catalytic O-(5'-phospho-DNA)-tyrosine intermediate.

Belongs to the type IA topoisomerase family. Mg(2+) serves as cofactor.

The catalysed reaction is ATP-independent breakage of single-stranded DNA, followed by passage and rejoining.. Functionally, introduces a single-strand break via transesterification at a target site in duplex DNA. Releases the supercoiling and torsional tension of DNA introduced during the DNA replication and transcription by transiently cleaving and rejoining one strand of the DNA duplex. The scissile phosphodiester is attacked by the catalytic tyrosine of the enzyme, resulting in the formation of a DNA-(5'-phosphotyrosyl)-enzyme intermediate and the expulsion of a 3'-OH DNA strand. The chain is DNA topoisomerase 3 (TOP3) from Candidozyma auris (Yeast).